The sequence spans 93 residues: RNA-binding protein Hfq (93 aa).

The region spanning 9–68 (DPFLNALRRERVPVSIYLVNGIKLQGQVESFDQFVILLKNTVSQMVYKHAISTVVPARPF) is the Sm domain. The segment at 70–93 (VNSHTAAPSPAGGFNGQQDDNNDQ) is disordered.

This sequence belongs to the Hfq family. As to quaternary structure, homohexamer.

Its function is as follows. RNA chaperone that binds small regulatory RNA (sRNAs) and mRNAs to facilitate mRNA translational regulation in response to envelope stress, environmental stress and changes in metabolite concentrations. Also binds with high specificity to tRNAs. This chain is RNA-binding protein Hfq, found in Shewanella sediminis (strain HAW-EB3).